Reading from the N-terminus, the 548-residue chain is MFS-type transporter TOXA (548 aa).

Polar residues predominate over residues 1-12 (MDEQIVSASSNV). The tract at residues 1–33 (MDEQIVSASSNVKDGVEKQPVKDREDVDANVVP) is disordered. The segment covering 14–27 (DGVEKQPVKDREDV) has biased composition (basic and acidic residues). The next 14 helical transmembrane spans lie at 43 to 63 (ISLISLFSIVMSLGAAAFLGA), 85 to 105 (AVAWYGAIYLLMSGTTQPLFG), 114 to 134 (KWLFITCLIVLQLGSLVCALA), 146 to 166 (VAGIGAGGILSGALNIVALIV), 177 to 197 (MIGALECVALIIGPIIGGAIA), 204 to 224 (WCFWINLPIGAAVCAILLFFF), 250 to 270 (IGAGMIISSLVCLSLALQWGG), 280 to 300 (VVALLVVFGVLFLSASGHQYW), 316 to 336 (GFLLSLFNGLCFGGVQYAALY), 357 to 377 (MLPIVGAIIGVNIVAGITISF), 382 to 402 (APFIVIATVLASVGSGLLYTF), 411 to 431 (IIGYQLIYGAGSGAGVQQAFI), 444 to 464 (YASASVLLMNSMSGVITLCVC), and 518 to 538 (FLVAIVLSCASVLGWPFLSWA).

The protein belongs to the major facilitator superfamily. TCR/Tet family.

The protein localises to the membrane. In terms of biological role, MFS-type transporter; part of the diffuse TOX2 gene cluster that mediates the biosynthesis of the HC-toxin, cyclic tetrapeptide of structure cyclo(D-Pro-L-Ala-D-Ala-L-Aeo), where Aeo stands for 2-amino-9,10-epoxi-8-oxodecanoic acid. HC-toxin is a determinant of specificity and virulence in the interaction between the producing fungus and its host, maize. TOXA acts as a HC-toxin efflux pump which contributes to self-protection against HC-toxin and/or the secretion of HC-toxin into the extracellular milieu. In Cochliobolus carbonum (Maize leaf spot fungus), this protein is MFS-type transporter TOXA.